A 365-amino-acid polypeptide reads, in one-letter code: Parathion hydrolase (365 aa).

Residues M1–G29 constitute a signal peptide (tat-type signal). H55, H57, K169, H201, H230, and D301 together coordinate Zn(2+). At K169 the chain carries N6-carboxylysine.

The protein belongs to the metallo-dependent hydrolases superfamily. Phosphotriesterase family. As to quaternary structure, homodimer. It depends on Zn(2+) as a cofactor. Post-translationally, predicted to be exported by the Tat system. The position of the signal peptide cleavage has been experimentally proven.

The protein localises to the cell membrane. It catalyses the reaction An aryl dialkyl phosphate + H2O = dialkyl phosphate + an aryl alcohol.. Functionally, has an unusual substrate specificity for synthetic organophosphate triesters and phosphorofluoridates. All of the phosphate triesters found to be substrates are synthetic compounds. The identity of any naturally occurring substrate for the enzyme is unknown. Has no detectable activity with phosphate monoesters or diesters and no activity as an esterase or protease. It catalyzes the hydrolysis of the insecticide paraoxon at a rate approaching the diffusion limit and thus appears to be optimally evolved for utilizing this synthetic substrate. This chain is Parathion hydrolase (opd), found in Brevundimonas diminuta (Pseudomonas diminuta).